Here is a 180-residue protein sequence, read N- to C-terminus: ATP synthase subunit delta (180 aa).

It belongs to the ATPase delta chain family. F-type ATPases have 2 components, F(1) - the catalytic core - and F(0) - the membrane proton channel. F(1) has five subunits: alpha(3), beta(3), gamma(1), delta(1), epsilon(1). F(0) has three main subunits: a(1), b(2) and c(10-14). The alpha and beta chains form an alternating ring which encloses part of the gamma chain. F(1) is attached to F(0) by a central stalk formed by the gamma and epsilon chains, while a peripheral stalk is formed by the delta and b chains.

The protein localises to the cell membrane. Its function is as follows. F(1)F(0) ATP synthase produces ATP from ADP in the presence of a proton or sodium gradient. F-type ATPases consist of two structural domains, F(1) containing the extramembraneous catalytic core and F(0) containing the membrane proton channel, linked together by a central stalk and a peripheral stalk. During catalysis, ATP synthesis in the catalytic domain of F(1) is coupled via a rotary mechanism of the central stalk subunits to proton translocation. In terms of biological role, this protein is part of the stalk that links CF(0) to CF(1). It either transmits conformational changes from CF(0) to CF(1) or is implicated in proton conduction. The protein is ATP synthase subunit delta of Bacillus mycoides (strain KBAB4) (Bacillus weihenstephanensis).